Reading from the N-terminus, the 244-residue chain is 1-(5-phosphoribosyl)-5-[(5-phosphoribosylamino)methylideneamino] imidazole-4-carboxamide isomerase (244 aa).

Aspartate 11 (proton acceptor) is an active-site residue. Residue aspartate 132 is the Proton donor of the active site.

Belongs to the HisA/HisF family.

The protein resides in the cytoplasm. It carries out the reaction 1-(5-phospho-beta-D-ribosyl)-5-[(5-phospho-beta-D-ribosylamino)methylideneamino]imidazole-4-carboxamide = 5-[(5-phospho-1-deoxy-D-ribulos-1-ylimino)methylamino]-1-(5-phospho-beta-D-ribosyl)imidazole-4-carboxamide. Its pathway is amino-acid biosynthesis; L-histidine biosynthesis; L-histidine from 5-phospho-alpha-D-ribose 1-diphosphate: step 4/9. The protein is 1-(5-phosphoribosyl)-5-[(5-phosphoribosylamino)methylideneamino] imidazole-4-carboxamide isomerase of Sphingopyxis alaskensis (strain DSM 13593 / LMG 18877 / RB2256) (Sphingomonas alaskensis).